The primary structure comprises 189 residues: GTP cyclohydrolase 1 (189 aa).

Zn(2+)-binding residues include Cys-80, His-83, and Cys-152.

Belongs to the GTP cyclohydrolase I family. Toroid-shaped homodecamer, composed of two pentamers of five dimers.

It carries out the reaction GTP + H2O = 7,8-dihydroneopterin 3'-triphosphate + formate + H(+). It participates in cofactor biosynthesis; 7,8-dihydroneopterin triphosphate biosynthesis; 7,8-dihydroneopterin triphosphate from GTP: step 1/1. The sequence is that of GTP cyclohydrolase 1 from Latilactobacillus sakei subsp. sakei (strain 23K) (Lactobacillus sakei subsp. sakei).